A 154-amino-acid polypeptide reads, in one-letter code: 3-hydroxyacyl-[acyl-carrier-protein] dehydratase FabZ (154 aa).

Residue H60 is part of the active site.

Belongs to the thioester dehydratase family. FabZ subfamily.

It localises to the cytoplasm. It catalyses the reaction a (3R)-hydroxyacyl-[ACP] = a (2E)-enoyl-[ACP] + H2O. Involved in unsaturated fatty acids biosynthesis. Catalyzes the dehydration of short chain beta-hydroxyacyl-ACPs and long chain saturated and unsaturated beta-hydroxyacyl-ACPs. This is 3-hydroxyacyl-[acyl-carrier-protein] dehydratase FabZ from Actinobacillus pleuropneumoniae serotype 5b (strain L20).